A 437-amino-acid polypeptide reads, in one-letter code: MNNKTSNGDITNDEPTVGSKRSWTDVNYKFCEDKEKQVVEEIQTETSWADVDWDSVRESIAKSITEKETDIIGEEDKIHHEDNAMDYWDKFYKKNQNKFFKDRTYLHLEFPELNPLKITRDETFIFFEDDDAAAEGAENGGGGGGSDNLYQDKDDLEKQEKEREKKMANLLSKNVDIKELKNRWVKDIQELTNDESKKLTVLEIGCGTGATVYPLLKLNPEKYFYVFDFSPHAVNLVKSNSLYNEAKLNAFVCDIATEQIPTSIVKDNSIDMMLMIFVLSAISRDKMHAVANSLFKSLKPGGVLYIRDYGLYDMTQLRFISKKGKKIDENFYLRADGTRTYFFTTQVLSEIFEAAGFKTLVSKYDTRELRNRKRMISMYRVWVRGKFMKPLDNENTENNSKILSIYNDPINNNNNNNNNNNNNNNNTTTTTSTTTTN.

Residues 1–21 (MNNKTSNGDITNDEPTVGSKR) form a disordered region. Positions 146-180 (SDNLYQDKDDLEKQEKEREKKMANLLSKNVDIKEL) form a coiled coil. The segment at 408-437 (DPINNNNNNNNNNNNNNNNTTTTTSTTTTN) is disordered. The segment covering 411 to 437 (NNNNNNNNNNNNNNNNTTTTTSTTTTN) has biased composition (low complexity).

It belongs to the methyltransferase superfamily. METL family.

Probable methyltransferase. This chain is O-methyltransferase 3 (omt3), found in Dictyostelium discoideum (Social amoeba).